A 351-amino-acid chain; its full sequence is Phosphate acyltransferase (351 aa).

The protein belongs to the PlsX family. Homodimer. Probably interacts with PlsY.

The protein localises to the cytoplasm. It carries out the reaction a fatty acyl-[ACP] + phosphate = an acyl phosphate + holo-[ACP]. Its pathway is lipid metabolism; phospholipid metabolism. Functionally, catalyzes the reversible formation of acyl-phosphate (acyl-PO(4)) from acyl-[acyl-carrier-protein] (acyl-ACP). This enzyme utilizes acyl-ACP as fatty acyl donor, but not acyl-CoA. The protein is Phosphate acyltransferase of Neisseria meningitidis serogroup C / serotype 2a (strain ATCC 700532 / DSM 15464 / FAM18).